We begin with the raw amino-acid sequence, 167 residues long: Phosphopantetheine adenylyltransferase (167 aa).

Ser-10 provides a ligand contact to substrate. ATP-binding positions include 10 to 11 (SF) and His-18. Positions 42, 79, and 93 each coordinate substrate. Residues 94–96 (GLR), Glu-104, and 129–135 (VRHITAT) contribute to the ATP site.

The protein belongs to the bacterial CoaD family. Homohexamer. Mg(2+) is required as a cofactor.

It is found in the cytoplasm. The enzyme catalyses (R)-4'-phosphopantetheine + ATP + H(+) = 3'-dephospho-CoA + diphosphate. It participates in cofactor biosynthesis; coenzyme A biosynthesis; CoA from (R)-pantothenate: step 4/5. Its function is as follows. Reversibly transfers an adenylyl group from ATP to 4'-phosphopantetheine, yielding dephospho-CoA (dPCoA) and pyrophosphate. In Beijerinckia indica subsp. indica (strain ATCC 9039 / DSM 1715 / NCIMB 8712), this protein is Phosphopantetheine adenylyltransferase.